A 309-amino-acid chain; its full sequence is Probable manganese-dependent inorganic pyrophosphatase (309 aa).

The Mn(2+) site is built by H9, D13, D15, D75, H97, and D149.

Belongs to the PPase class C family. It depends on Mn(2+) as a cofactor.

It localises to the cytoplasm. It carries out the reaction diphosphate + H2O = 2 phosphate + H(+). In Bacillus cereus (strain ATCC 10987 / NRS 248), this protein is Probable manganese-dependent inorganic pyrophosphatase.